The sequence spans 460 residues: 7-cyano-7-deazaguanine synthase 2 (460 aa).

The active-site For GATase activity is the cysteine 2. A Glutamine amidotransferase type-2 domain is found at 2–225 (CSVTGVLIIK…PYSIVEVNDN (224 aa)). Residue 245-255 (ASGGLDSTVAA) coordinates ATP. Cysteine 426, cysteine 434, cysteine 437, and cysteine 440 together coordinate Zn(2+).

The protein belongs to the QueC family. The cofactor is Zn(2+).

The enzyme catalyses 7-carboxy-7-deazaguanine + NH4(+) + ATP = 7-cyano-7-deazaguanine + ADP + phosphate + H2O + H(+). Its pathway is purine metabolism; 7-cyano-7-deazaguanine biosynthesis. Catalyzes the ATP-dependent conversion of 7-carboxy-7-deazaguanine (CDG) to 7-cyano-7-deazaguanine (preQ(0)). This is 7-cyano-7-deazaguanine synthase 2 (queC2) from Sulfurisphaera tokodaii (strain DSM 16993 / JCM 10545 / NBRC 100140 / 7) (Sulfolobus tokodaii).